The following is a 276-amino-acid chain: Large ribosomal subunit protein uL2 (276 aa).

The interval 225–276 is disordered; it reads MNPNDHPHGGGEGRNPIGRNPVTPWGKPALGAKTRKKKHPSNRFIVKRRGKK. Residues 257-276 show a composition bias toward basic residues; the sequence is KTRKKKHPSNRFIVKRRGKK.

This sequence belongs to the universal ribosomal protein uL2 family. Part of the 50S ribosomal subunit. Forms a bridge to the 30S subunit in the 70S ribosome.

Its function is as follows. One of the primary rRNA binding proteins. Required for association of the 30S and 50S subunits to form the 70S ribosome, for tRNA binding and peptide bond formation. It has been suggested to have peptidyltransferase activity; this is somewhat controversial. Makes several contacts with the 16S rRNA in the 70S ribosome. This Desulfitobacterium hafniense (strain Y51) protein is Large ribosomal subunit protein uL2.